Here is a 181-residue protein sequence, read N- to C-terminus: Protein Syd (181 aa).

Belongs to the Syd family.

The protein resides in the cell inner membrane. Its function is as follows. Interacts with the SecY protein in vivo. May bind preferentially to an uncomplexed state of SecY, thus functioning either as a chelating agent for excess SecY in the cell or as a regulatory factor that negatively controls the translocase function. This is Protein Syd from Escherichia coli O17:K52:H18 (strain UMN026 / ExPEC).